Reading from the N-terminus, the 249-residue chain is 2,3-bisphosphoglycerate-dependent phosphoglycerate mutase (249 aa).

Residues 9–16 (RHGQSQWN), 22–23 (TG), arginine 61, 88–91 (ERHY), lysine 99, 115–116 (RR), and 184–185 (GN) each bind substrate. The active-site Tele-phosphohistidine intermediate is the histidine 10. Glutamate 88 (proton donor/acceptor) is an active-site residue.

This sequence belongs to the phosphoglycerate mutase family. BPG-dependent PGAM subfamily. Homodimer.

It catalyses the reaction (2R)-2-phosphoglycerate = (2R)-3-phosphoglycerate. The protein operates within carbohydrate degradation; glycolysis; pyruvate from D-glyceraldehyde 3-phosphate: step 3/5. Catalyzes the interconversion of 2-phosphoglycerate and 3-phosphoglycerate. This is 2,3-bisphosphoglycerate-dependent phosphoglycerate mutase from Xanthomonas campestris pv. campestris (strain B100).